The sequence spans 373 residues: Bifunctional enzyme IspD/IspF (373 aa).

Residues 1 to 213 form a 2-C-methyl-D-erythritol 4-phosphate cytidylyltransferase region; that stretch reads MSDLTLVLLG…CLQKPSATKR (213 aa). Positions 213 to 373 are 2-C-methyl-D-erythritol 2,4-cyclodiphosphate synthase; the sequence is RIGNGLDVHA…TLHYFDWSEI (161 aa). Asp-219 and His-221 together coordinate a divalent metal cation. Residues 219 to 221 and 245 to 246 contribute to the 4-CDP-2-C-methyl-D-erythritol 2-phosphate site; these read DVH and HS. His-253 serves as a coordination point for a divalent metal cation. 4-CDP-2-C-methyl-D-erythritol 2-phosphate contacts are provided by residues 267 to 269, 272 to 276, 343 to 346, Phe-350, and Arg-353; these read DIG, FPDSD, and TTTE.

It in the N-terminal section; belongs to the IspD/TarI cytidylyltransferase family. IspD subfamily. The protein in the C-terminal section; belongs to the IspF family. A divalent metal cation is required as a cofactor.

It carries out the reaction 2-C-methyl-D-erythritol 4-phosphate + CTP + H(+) = 4-CDP-2-C-methyl-D-erythritol + diphosphate. The enzyme catalyses 4-CDP-2-C-methyl-D-erythritol 2-phosphate = 2-C-methyl-D-erythritol 2,4-cyclic diphosphate + CMP. It functions in the pathway isoprenoid biosynthesis; isopentenyl diphosphate biosynthesis via DXP pathway; isopentenyl diphosphate from 1-deoxy-D-xylulose 5-phosphate: step 2/6. The protein operates within isoprenoid biosynthesis; isopentenyl diphosphate biosynthesis via DXP pathway; isopentenyl diphosphate from 1-deoxy-D-xylulose 5-phosphate: step 4/6. Bifunctional enzyme that catalyzes the formation of 4-diphosphocytidyl-2-C-methyl-D-erythritol from CTP and 2-C-methyl-D-erythritol 4-phosphate (MEP) (IspD), and catalyzes the conversion of 4-diphosphocytidyl-2-C-methyl-D-erythritol 2-phosphate (CDP-ME2P) to 2-C-methyl-D-erythritol 2,4-cyclodiphosphate (ME-CPP) with a corresponding release of cytidine 5-monophosphate (CMP) (IspF). This Nitratiruptor sp. (strain SB155-2) protein is Bifunctional enzyme IspD/IspF.